The following is a 353-amino-acid chain: DNA polymerase IV (353 aa).

Residues 6-187 (IIHIDCDCFY…LPVTKLHGVG (182 aa)) form the UmuC domain. Positions 10 and 105 each coordinate Mg(2+). Glu106 is a catalytic residue.

Belongs to the DNA polymerase type-Y family. Monomer. Requires Mg(2+) as cofactor.

It is found in the cytoplasm. It carries out the reaction DNA(n) + a 2'-deoxyribonucleoside 5'-triphosphate = DNA(n+1) + diphosphate. Functionally, poorly processive, error-prone DNA polymerase involved in untargeted mutagenesis. Copies undamaged DNA at stalled replication forks, which arise in vivo from mismatched or misaligned primer ends. These misaligned primers can be extended by PolIV. Exhibits no 3'-5' exonuclease (proofreading) activity. May be involved in translesional synthesis, in conjunction with the beta clamp from PolIII. This Pseudomonas syringae pv. tomato (strain ATCC BAA-871 / DC3000) protein is DNA polymerase IV.